The sequence spans 194 residues: MLSSTLRVAVVCVSNVNRSMEAHSILRRKGLSVRSFGTESHVRLPGPRPNRPVVYDFATTYKEMYNDLLRKDRERYTRNGILHILGRNERIKPGPERFQECTDFFDVIFTCEESVYDTVVEDLCSREQQTFQPVHVINMDIQDTLEDATLGAFLICEICQCLQQSDDMEDNLEELLLQMEEKAGKSFLHTVCFY.

It belongs to the SSU72 phosphatase family.

It is found in the nucleus. The catalysed reaction is O-phospho-L-seryl-[protein] + H2O = L-seryl-[protein] + phosphate. It carries out the reaction O-phospho-L-threonyl-[protein] + H2O = L-threonyl-[protein] + phosphate. In terms of biological role, protein phosphatase that catalyzes the dephosphorylation of the C-terminal domain of RNA polymerase II. Plays a role in RNA processing and termination. The sequence is that of RNA polymerase II subunit A C-terminal domain phosphatase SSU72 like protein 4 from Homo sapiens (Human).